A 748-amino-acid polypeptide reads, in one-letter code: Rho GTPase-activating protein 24 (748 aa).

Residues 1-20 form a disordered region; the sequence is MEENNDSTENPQQGQGRQNA. A compositionally biased stretch (polar residues) spans 7 to 18; sequence STENPQQGQGRQ. In terms of domain architecture, PH spans 19-125; the sequence is NAIKCGWLRK…WVKSIRRVIW (107 aa). The 195-residue stretch at 135–329 folds into the Rho-GAP domain; it reads QKLEDTVRYE…VMISKHDCLF (195 aa). 2 disordered regions span residues 354-476 and 582-641; these read TMGQ…GTHS and DFFG…SSNH. Composition is skewed to polar residues over residues 356-374 and 382-405; these read GQLQ…SRQC and PQRS…SPKN. Serine 369, serine 391, serine 396, serine 398, serine 402, serine 413, serine 415, and serine 437 each carry phosphoserine. A compositionally biased stretch (polar residues) spans 432–476; sequence IVTNGSFSSSNAEGLEKTQTTPNGSLQARRSSSLKVSGTKMGTHS. Threonine 452 is modified (phosphothreonine). Residues 600–615 are compositionally biased toward basic and acidic residues; that stretch reads DLSHPRDYESKSDHRS. The span at 617-641 shows a compositional bias: low complexity; the sequence is GGRSSRATSSSDNSETFVGNSSSNH. A coiled-coil region spans residues 649–729; it reads SSLKQEMTKQ…KEMEQFFSTF (81 aa).

In terms of assembly, interacts with FLNA. In terms of processing, phosphorylated by ROCK, leading to activate the RacGAP activity. As to expression, isoform 1 is widely expressed with a higher level in kidney. Isoform 2 is mainly expressed in endothelial cells.

It is found in the cytoplasm. It localises to the cytoskeleton. Its subcellular location is the cell junction. The protein localises to the adherens junction. The protein resides in the focal adhesion. It is found in the cell projection. Its function is as follows. Rho GTPase-activating protein involved in cell polarity, cell morphology and cytoskeletal organization. Acts as a GTPase activator for the Rac-type GTPase by converting it to an inactive GDP-bound state. Controls actin remodeling by inactivating Rac downstream of Rho leading to suppress leading edge protrusion and promotes cell retraction to achieve cellular polarity. Able to suppress RAC1 and CDC42 activity in vitro. Overexpression induces cell rounding with partial or complete disruption of actin stress fibers and formation of membrane ruffles, lamellipodia, and filopodia. Isoform 2 is a vascular cell-specific GAP involved in modulation of angiogenesis. This Homo sapiens (Human) protein is Rho GTPase-activating protein 24 (ARHGAP24).